The primary structure comprises 431 residues: Serine/threonine-protein kinase Sgk1 (431 aa).

A necessary for localization to the mitochondria region spans residues 1–60; it reads MTVKAEAARSTLTYSRMRGMVAILIAFMKQRRMGLNDFIQKIASNTYACKHAEVQSILKM. The interval 65–92 is disordered; sequence EPELMNANPSPPPSPSQQINLGPSSNPH. Serine 74 carries the post-translational modification Phosphoserine. Residue serine 78 is modified to Phosphoserine; by MAPK7. Over residues 81-91 the composition is skewed to polar residues; sequence QQINLGPSSNP. Positions 98–355 constitute a Protein kinase domain; that stretch reads FHFLKVIGKG…FMEIKSHIFF (258 aa). Residues 104–112 and lysine 127 contribute to the ATP site; that span reads IGKGSFGKV. Residues 131–141 carry the Nuclear localization signal motif; that stretch reads KKAILKKKEEK. Residue aspartate 222 is the Proton acceptor of the active site. Threonine 256 carries the post-translational modification Phosphothreonine; by PDPK1. The AGC-kinase C-terminal domain occupies 356 to 431; that stretch reads SLINWDDLIN…SYAPPVDSFL (76 aa). Position 369 is a phosphothreonine; by PKA (threonine 369). Phosphoserine occurs at positions 397, 401, and 422.

It belongs to the protein kinase superfamily. AGC Ser/Thr protein kinase family. Homodimer; disulfide-linked. Interacts with MAPK3/ERK1, MAPK1/ERK2, MAP2K1/MEK1, MAP2K2/MEK2, NEDD4, NEDD4L, MAPT/TAU, MAPK7, CREB1, SLC9A3R2/NHERF2 and KCNJ1/ROMK1. Forms a trimeric complex with FBXW7 and NOTCH1 Associates with the mammalian target of rapamycin complex 2 (mTORC2) via an interaction with MAPKAP1/SIN1. Regulated by phosphorylation. Activated by phosphorylation on Ser-422 by mTORC2, transforming it into a substrate for PDPK1 which phosphorylates it on Thr-256. Phosphorylation on Ser-397 and Ser-401 are also essential for its activity. Phosphorylation on Ser-78 by MAPK7 is required for growth factor-induced cell cycle progression. Post-translationally, ubiquitinated by NEDD4L; which promotes proteasomal degradation. Ubiquitinated by SYVN1 at the endoplasmic reticulum; which promotes rapid proteasomal degradation and maintains a high turnover rate in resting cells.

It localises to the cytoplasm. The protein resides in the nucleus. Its subcellular location is the endoplasmic reticulum membrane. It is found in the cell membrane. The protein localises to the mitochondrion. The catalysed reaction is L-seryl-[protein] + ATP = O-phospho-L-seryl-[protein] + ADP + H(+). The enzyme catalyses L-threonyl-[protein] + ATP = O-phospho-L-threonyl-[protein] + ADP + H(+). Its activity is regulated as follows. Two specific sites, one in the kinase domain (Thr-256) and the other in the C-terminal regulatory region (Ser-422), need to be phosphorylated for its full activation. Phosphorylation at Ser-397 and Ser-401 are also essential for its activity. Activated by WNK1, WNK2, WNK3 and WNK4; which promote phosphorylation by mTORC2. Its function is as follows. Serine/threonine-protein kinase which is involved in the regulation of a wide variety of ion channels, membrane transporters, cellular enzymes, transcription factors, neuronal excitability, cell growth, proliferation, survival, migration and apoptosis. Plays an important role in cellular stress response. Contributes to regulation of renal Na(+) retention, renal K(+) elimination, salt appetite, gastric acid secretion, intestinal Na(+)/H(+) exchange and nutrient transport, insulin-dependent salt sensitivity of blood pressure, salt sensitivity of peripheral glucose uptake, cardiac repolarization and memory consolidation. Up-regulates Na(+) channels: SCNN1A/ENAC, SCN5A and ASIC1/ACCN2, K(+) channels: KCNJ1/ROMK1, KCNA1-5, KCNQ1-5 and KCNE1, epithelial Ca(2+) channels: TRPV5 and TRPV6, chloride channels: BSND, CLCN2 and CFTR, glutamate transporters: SLC1A3/EAAT1, SLC1A2 /EAAT2, SLC1A1/EAAT3, SLC1A6/EAAT4 and SLC1A7/EAAT5, amino acid transporters: SLC1A5/ASCT2, SLC38A1/SN1 and SLC6A19, creatine transporter: SLC6A8, Na(+)/dicarboxylate cotransporter: SLC13A2/NADC1, Na(+)-dependent phosphate cotransporter: SLC34A2/NAPI-2B, glutamate receptor: GRIK2/GLUR6. Up-regulates carriers: SLC9A3/NHE3, SLC12A1/NKCC2, SLC12A3/NCC, SLC5A3/SMIT, SLC2A1/GLUT1, SLC5A1/SGLT1 and SLC15A2/PEPT2. Regulates enzymes: GSK3A/B, PMM2 and Na(+)/K(+) ATPase, and transcription factors: CTNNB1 and nuclear factor NF-kappa-B. Stimulates sodium transport into epithelial cells by enhancing the stability and expression of SCNN1A/ENAC. This is achieved by phosphorylating the NEDD4L ubiquitin E3 ligase, promoting its interaction with 14-3-3 proteins, thereby preventing it from binding to SCNN1A/ENAC and targeting it for degradation. Regulates store-operated Ca(+2) entry (SOCE) by stimulating ORAI1 and STIM1. Regulates KCNJ1/ROMK1 directly via its phosphorylation or indirectly via increased interaction with SLC9A3R2/NHERF2. Phosphorylates MDM2 and activates MDM2-dependent ubiquitination of p53/TP53. Phosphorylates MAPT/TAU and mediates microtubule depolymerization and neurite formation in hippocampal neurons. Phosphorylates SLC2A4/GLUT4 and up-regulates its activity. Phosphorylates APBB1/FE65 and promotes its localization to the nucleus. Phosphorylates MAPK1/ERK2 and activates it by enhancing its interaction with MAP2K1/MEK1 and MAP2K2/MEK2. Phosphorylates FBXW7 and plays an inhibitory role in the NOTCH1 signaling. Phosphorylates FOXO1 resulting in its relocalization from the nucleus to the cytoplasm. Phosphorylates FOXO3, promoting its exit from the nucleus and interference with FOXO3-dependent transcription. Phosphorylates BRAF and MAP3K3/MEKK3 and inhibits their activity. Phosphorylates SLC9A3/NHE3 in response to dexamethasone, resulting in its activation and increased localization at the cell membrane. Phosphorylates CREB1. Necessary for vascular remodeling during angiogenesis. This chain is Serine/threonine-protein kinase Sgk1 (Sgk1), found in Mus musculus (Mouse).